We begin with the raw amino-acid sequence, 240 residues long: Zinc finger CCCH domain-containing protein 52 (240 aa).

Disordered stretches follow at residues 1 to 37 and 81 to 106; these read MDARKRGRPEAAASHNSNGGFKRSKQEMESISTGLGS and SQVSRNMQGSGGPGGRFSGRGDPGSG. The C3H1-type 1 zinc-finger motif lies at 36-64; sequence GSKSKPCTKFFSTSGCPFGDNCHFLHYVP. Gly residues predominate over residues 89–104; that stretch reads GSGGPGGRFSGRGDPG. Positions 113–177 constitute a KH domain; it reads ASTSKISVDA…EQINVASGMV (65 aa). Residues 205 to 232 form a C3H1-type 2 zinc finger; it reads NYKTKICDRYSKGNCTYGDRCHFAHGES.

The sequence is that of Zinc finger CCCH domain-containing protein 52 from Arabidopsis thaliana (Mouse-ear cress).